The sequence spans 259 residues: 5'-nucleotidase SurE (259 aa).

4 residues coordinate a divalent metal cation: Asp8, Asp9, Ser40, and Asn92.

This sequence belongs to the SurE nucleotidase family. It depends on a divalent metal cation as a cofactor.

The protein localises to the cytoplasm. The enzyme catalyses a ribonucleoside 5'-phosphate + H2O = a ribonucleoside + phosphate. In terms of biological role, nucleotidase that shows phosphatase activity on nucleoside 5'-monophosphates. In Xanthomonas oryzae pv. oryzae (strain MAFF 311018), this protein is 5'-nucleotidase SurE.